We begin with the raw amino-acid sequence, 130 residues long: Small ribosomal subunit protein uS8 (130 aa).

This sequence belongs to the universal ribosomal protein uS8 family. As to quaternary structure, part of the 30S ribosomal subunit.

Its function is as follows. One of the primary rRNA binding proteins, it binds directly to 16S rRNA central domain where it helps coordinate assembly of the platform of the 30S subunit. This is Small ribosomal subunit protein uS8 from Methanothermobacter thermautotrophicus (strain ATCC 29096 / DSM 1053 / JCM 10044 / NBRC 100330 / Delta H) (Methanobacterium thermoautotrophicum).